The chain runs to 367 residues: GMP synthase [glutamine-hydrolyzing] subunit B (367 aa).

One can recognise a GMPS ATP-PPase domain in the interval Phe-2–Arg-190. Ser-29 to Thr-35 is an ATP binding site.

Heterodimer composed of a glutamine amidotransferase subunit (A) and a GMP-binding subunit (B).

The catalysed reaction is XMP + L-glutamine + ATP + H2O = GMP + L-glutamate + AMP + diphosphate + 2 H(+). It functions in the pathway purine metabolism; GMP biosynthesis; GMP from XMP (L-Gln route): step 1/1. Catalyzes the synthesis of GMP from XMP. The polypeptide is GMP synthase [glutamine-hydrolyzing] subunit B (Saccharolobus islandicus (strain M.16.27) (Sulfolobus islandicus)).